Here is a 273-residue protein sequence, read N- to C-terminus: Putative carboxymethylenebutenolidase (273 aa).

Catalysis depends on residues cysteine 130, aspartate 191, and histidine 223.

It belongs to the dienelactone hydrolase family.

It catalyses the reaction 2-(5-oxo-2,5-dihydrofuran-2-ylidene)acetate + H2O = 4-oxohex-2-enedioate + H(+). In Saccharomyces cerevisiae (strain ATCC 204508 / S288c) (Baker's yeast), this protein is Putative carboxymethylenebutenolidase.